A 550-amino-acid polypeptide reads, in one-letter code: Crystal protein (550 aa).

The N-terminal stretch at 1 to 19 (MNKIIILLIILLSFDIISA) is a signal peptide. Cysteine 91 and cysteine 111 form a disulfide bridge. A glycan (N-linked (GlcNAc...) asparagine) is linked at asparagine 156. Serine 215 acts as the Acyl-ester intermediate in catalysis. Cysteine 267 and cysteine 274 are disulfide-bonded. Residues glutamate 340 and histidine 443 each act as charge relay system in the active site. The N-linked (GlcNAc...) asparagine glycan is linked to asparagine 506.

The protein belongs to the type-B carboxylesterase/lipase family.

It is found in the cytoplasmic vesicle. It localises to the esterosome membrane. This is Crystal protein (cryS) from Dictyostelium discoideum (Social amoeba).